The primary structure comprises 463 residues: Aurantioclavine synthase cnsA (463 aa).

Residues 16–199 (ERFNQRGNVF…TQATVRVFPD (184 aa)) form the FAD-binding PCMH-type domain.

This sequence belongs to the oxygen-dependent FAD-linked oxidoreductase family. FAD serves as cofactor.

Its pathway is alkaloid biosynthesis. Functionally, FAD-linked oxidoreductase; part of the gene cluster that mediates the biosynthesis of communesins, a prominent class of indole alkaloids with great potential as pharmaceuticals. Communesins are biosynthesized by the coupling of tryptamine and aurantioclavine, two building blocks derived from L-tryptophan. The L-tryptophan decarboxylase cnsB converts L-tryptophan to tryptamine, whereas the tryptophan dimethylallyltransferase cnsF converts L-tryptophan to 4-dimethylallyl tryptophan which is further transformed to aurantioclavine by the aurantioclavine synthase cnsA, probably aided by the catalase cnsD. The cytochrome P450 monooxygenase cnsC catalyzes the heterodimeric coupling between the two different indole moieties, tryptamine and aurantioclavine, to construct vicinal quaternary stereocenters and yield the heptacyclic communesin scaffold. The O-methyltransferase cnsE then methylates the communesin scaffold to produce communesin K, the simplest characterized communesin that contains the heptacyclic core. The dioxygenase cnsJ converts communesin K into communesin I. Acylation to introduce the hexadienyl group at position N16 of communesin I by the acyltransferase cnsK leads to the production of communesin B. The hexadienyl group is produced by the highly reducing polyketide synthase cnsI, before being hydrolytically removed from cnsI by the serine hydrolase cnsH, converted into hexadienyl-CoA by the CoA ligase cnsG, and then transferred to communesin I by cnsK. Surprisingly, cnsK may also be a promiscuous acyltransferase that can tolerate a range of acyl groups, including acetyl-, propionyl-, and butyryl-CoA, which lead to communesins A, G and H respectively. The roles of the alpha-ketoglutarate-dependent dioxygenases cnsM and cnsP have still to be determined. The chain is Aurantioclavine synthase cnsA from Penicillium expansum (Blue mold rot fungus).